A 113-amino-acid polypeptide reads, in one-letter code: Nucleoid-associated protein PMT_0025 (113 aa).

Belongs to the YbaB/EbfC family. As to quaternary structure, homodimer.

It localises to the cytoplasm. It is found in the nucleoid. Binds to DNA and alters its conformation. May be involved in regulation of gene expression, nucleoid organization and DNA protection. This Prochlorococcus marinus (strain MIT 9313) protein is Nucleoid-associated protein PMT_0025.